A 338-amino-acid chain; its full sequence is tRNA N6-adenosine threonylcarbamoyltransferase (338 aa).

Fe cation is bound by residues H111 and H115. Residues 134-138 (VVSGG), D167, G180, D184, and N272 contribute to the substrate site. Residue D300 participates in Fe cation binding.

This sequence belongs to the KAE1 / TsaD family. Fe(2+) is required as a cofactor.

The protein localises to the cytoplasm. It catalyses the reaction L-threonylcarbamoyladenylate + adenosine(37) in tRNA = N(6)-L-threonylcarbamoyladenosine(37) in tRNA + AMP + H(+). Functionally, required for the formation of a threonylcarbamoyl group on adenosine at position 37 (t(6)A37) in tRNAs that read codons beginning with adenine. Is involved in the transfer of the threonylcarbamoyl moiety of threonylcarbamoyl-AMP (TC-AMP) to the N6 group of A37, together with TsaE and TsaB. TsaD likely plays a direct catalytic role in this reaction. The protein is tRNA N6-adenosine threonylcarbamoyltransferase of Syntrophus aciditrophicus (strain SB).